Consider the following 239-residue polypeptide: MAATLVAARGTRPAPAWGPEAIAPDWENREVSTGTTIMAVQFDGGVVLGADSRTTTGSYIANRVTDKLTPIHDRIFCCRSGSAADTQAVADAVTYQLGFHSIELNEPPLVHTAASLFKEMCYRYREDLMAGIIIAGWDPQEGGQVYSVPMGGMMVRQPFAIGGSGSSYIYGYVDATYREGMTKEECLQFTANALALAMERDGSSGGVIRLAAIAEPGVERQVLLGDQIPKFTIATLPPL.

Position 2 is an N-acetylalanine (Ala-2). The propeptide at 2–34 is removed in mature form; sequence AATLVAARGTRPAPAWGPEAIAPDWENREVSTG. Thr-35 functions as the Nucleophile in the catalytic mechanism. Thr-69 carries the phosphothreonine modification.

It belongs to the peptidase T1B family. The 26S proteasome consists of a 20S proteasome core and two 19S regulatory subunits. The 20S proteasome core is a barrel-shaped complex made of 28 subunits that are arranged in four stacked rings. The two outer rings are each formed by seven alpha subunits, and the two inner rings are formed by seven beta subunits. The proteolytic activity is exerted by three beta-subunits PSMB5, PSMB6 and PSMB7.

Its subcellular location is the cytoplasm. The protein localises to the nucleus. The enzyme catalyses Cleavage of peptide bonds with very broad specificity.. In terms of biological role, component of the 20S core proteasome complex involved in the proteolytic degradation of most intracellular proteins. This complex plays numerous essential roles within the cell by associating with different regulatory particles. Associated with two 19S regulatory particles, forms the 26S proteasome and thus participates in the ATP-dependent degradation of ubiquitinated proteins. The 26S proteasome plays a key role in the maintenance of protein homeostasis by removing misfolded or damaged proteins that could impair cellular functions, and by removing proteins whose functions are no longer required. Associated with the PA200 or PA28, the 20S proteasome mediates ubiquitin-independent protein degradation. This type of proteolysis is required in several pathways including spermatogenesis (20S-PA200 complex) or generation of a subset of MHC class I-presented antigenic peptides (20S-PA28 complex). Within the 20S core complex, PSMB6 displays a peptidylglutamyl-hydrolyzing activity also termed postacidic or caspase-like activity, meaning that the peptides bond hydrolysis occurs directly after acidic residues. The sequence is that of Proteasome subunit beta type-6 (PSMB6) from Bos taurus (Bovine).